The sequence spans 71 residues: Cold shock-like protein CspB (71 aa).

In terms of domain architecture, CSD spans 7-67 (GLVKWFNADK…GAKGPAAANV (61 aa)).

The protein resides in the cytoplasm. This is Cold shock-like protein CspB (cspB) from Escherichia coli (strain K12).